The chain runs to 540 residues: Chaperonin GroEL (540 aa).

ATP is bound by residues 29-32, 86-90, G413, 476-478, and D492; these read TIGP, DGTTT, and NAA.

The protein belongs to the chaperonin (HSP60) family. Forms a cylinder of 14 subunits composed of two heptameric rings stacked back-to-back. Interacts with the co-chaperonin GroES.

The protein resides in the cytoplasm. The enzyme catalyses ATP + H2O + a folded polypeptide = ADP + phosphate + an unfolded polypeptide.. Together with its co-chaperonin GroES, plays an essential role in assisting protein folding. The GroEL-GroES system forms a nano-cage that allows encapsulation of the non-native substrate proteins and provides a physical environment optimized to promote and accelerate protein folding. In Staphylococcus carnosus (strain TM300), this protein is Chaperonin GroEL.